Here is a 245-residue protein sequence, read N- to C-terminus: MASSSGLRSCSAVGVPSLLAPSSRSGRSGLPFCAYATTSGRVTMSAEWFPGQPRPAHLDGSSPGDFGFDPLGLATVPENFERFKESEIYHCRWAMLCVPGVLVPEALGLGNWVKAQEWAALPDGQATYLGNPVPWGNLPTILAIEFLAIAFAEQQRTMEKDPEKKKYPGGAFDPLGFSKDPAKFEELKLKEIKNGRLAMLAFVGFCVQQSAYPGTGPLENLATHLADPWHNNIGDIVIPRNIYGP.

The transit peptide at 1–44 directs the protein to the chloroplast; that stretch reads MASSSGLRSCSAVGVPSLLAPSSRSGRSGLPFCAYATTSGRVTM. Tryptophan 48 is a chlorophyll b binding site. Positions 68, 87, and 90 each coordinate chlorophyll a. Arginine 92 is a binding site for chlorophyll b. A helical transmembrane segment spans residues 93–113; that stretch reads WAMLCVPGVLVPEALGLGNWV. Residue leucine 129 coordinates chlorophyll a. The helical transmembrane segment at 132-152 threads the bilayer; the sequence is PVPWGNLPTILAIEFLAIAFA. Chlorophyll b-binding residues include valine 133, glutamate 153, and arginine 156. Residues lysine 190, glutamate 191, asparagine 194, arginine 196, glutamine 208, and histidine 224 each coordinate chlorophyll a.

It belongs to the light-harvesting chlorophyll a/b-binding (LHC) protein family. As to quaternary structure, the LHC complex consists of chlorophyll a-b binding proteins. Binds at least 14 chlorophylls (8 Chl-a and 6 Chl-b) and carotenoids such as lutein and neoxanthin. serves as cofactor. In terms of processing, photoregulated by reversible phosphorylation of its threonine residues.

Its subcellular location is the plastid. It is found in the chloroplast thylakoid membrane. In terms of biological role, the light-harvesting complex (LHC) functions as a light receptor, it captures and delivers excitation energy to photosystems with which it is closely associated. The polypeptide is Chlorophyll a-b binding protein 1B-21, chloroplastic (LHC Ib-21) (Hordeum vulgare (Barley)).